We begin with the raw amino-acid sequence, 807 residues long: Hyaluronate lyase (807 aa).

The N-terminal stretch at 1–40 (MTYRIKKWQKLSTITLLMAGVITLNGGEFRSVDKHQIAVA) is a signal peptide. Active-site residues include asparagine 241, histidine 297, and tyrosine 306.

It belongs to the polysaccharide lyase 8 family.

It is found in the secreted. The enzyme catalyses [hyaluronan](n) = n 3-(4-deoxy-beta-D-gluc-4-enuronosyl)-N-acetyl-D-glucosamine + H2O. The chain is Hyaluronate lyase from Staphylococcus aureus (strain NCTC 8325 / PS 47).